The following is a 244-amino-acid chain: ATP-dependent dethiobiotin synthetase BioD 1 (244 aa).

Residue 12 to 17 participates in ATP binding; the sequence is NVGKTV. Residue T16 coordinates Mg(2+). Residue K37 is part of the active site. ATP is bound at residue D68. Residues D68 and E126 each contribute to the Mg(2+) site. Residues 186–187, 215–217, and E222 each bind ATP; these read NR and PYL.

It belongs to the dethiobiotin synthetase family. In terms of assembly, homodimer. Requires Mg(2+) as cofactor.

The protein resides in the cytoplasm. It catalyses the reaction (7R,8S)-7,8-diammoniononanoate + CO2 + ATP = (4R,5S)-dethiobiotin + ADP + phosphate + 3 H(+). It functions in the pathway cofactor biosynthesis; biotin biosynthesis; biotin from 7,8-diaminononanoate: step 1/2. Functionally, catalyzes a mechanistically unusual reaction, the ATP-dependent insertion of CO2 between the N7 and N8 nitrogen atoms of 7,8-diaminopelargonic acid (DAPA, also called 7,8-diammoniononanoate) to form a ureido ring. This Pasteurella multocida (strain Pm70) protein is ATP-dependent dethiobiotin synthetase BioD 1.